Here is a 276-residue protein sequence, read N- to C-terminus: NADPH-dependent 7-cyano-7-deazaguanine reductase (276 aa).

Substrate is bound at residue 83–85 (IES). 85–86 (SK) contacts NADPH. Cysteine 184 acts as the Thioimide intermediate in catalysis. Aspartate 191 acts as the Proton donor in catalysis. 223–224 (HE) is a substrate binding site. 252–253 (RG) lines the NADPH pocket.

Belongs to the GTP cyclohydrolase I family. QueF type 2 subfamily. In terms of assembly, homodimer.

It localises to the cytoplasm. It catalyses the reaction 7-aminomethyl-7-carbaguanine + 2 NADP(+) = 7-cyano-7-deazaguanine + 2 NADPH + 3 H(+). Its pathway is tRNA modification; tRNA-queuosine biosynthesis. Its function is as follows. Catalyzes the NADPH-dependent reduction of 7-cyano-7-deazaguanine (preQ0) to 7-aminomethyl-7-deazaguanine (preQ1). The sequence is that of NADPH-dependent 7-cyano-7-deazaguanine reductase from Pseudomonas aeruginosa (strain ATCC 15692 / DSM 22644 / CIP 104116 / JCM 14847 / LMG 12228 / 1C / PRS 101 / PAO1).